Reading from the N-terminus, the 190-residue chain is Large ribosomal subunit protein uL5 (190 aa).

It belongs to the universal ribosomal protein uL5 family. As to quaternary structure, part of the 50S ribosomal subunit; part of the 5S rRNA/L5/L18/L25 subcomplex. Contacts the 5S rRNA and the P site tRNA. Forms a bridge to the 30S subunit in the 70S ribosome.

In terms of biological role, this is one of the proteins that bind and probably mediate the attachment of the 5S RNA into the large ribosomal subunit, where it forms part of the central protuberance. In the 70S ribosome it contacts protein S13 of the 30S subunit (bridge B1b), connecting the 2 subunits; this bridge is implicated in subunit movement. Contacts the P site tRNA; the 5S rRNA and some of its associated proteins might help stabilize positioning of ribosome-bound tRNAs. The sequence is that of Large ribosomal subunit protein uL5 from Blochmanniella floridana.